Here is a 260-residue protein sequence, read N- to C-terminus: 3-deoxy-manno-octulosonate cytidylyltransferase (260 aa).

It belongs to the KdsB family.

The protein localises to the cytoplasm. It catalyses the reaction 3-deoxy-alpha-D-manno-oct-2-ulosonate + CTP = CMP-3-deoxy-beta-D-manno-octulosonate + diphosphate. It functions in the pathway nucleotide-sugar biosynthesis; CMP-3-deoxy-D-manno-octulosonate biosynthesis; CMP-3-deoxy-D-manno-octulosonate from 3-deoxy-D-manno-octulosonate and CTP: step 1/1. The protein operates within bacterial outer membrane biogenesis; lipopolysaccharide biosynthesis. Its function is as follows. Activates KDO (a required 8-carbon sugar) for incorporation into bacterial lipopolysaccharide in Gram-negative bacteria. This chain is 3-deoxy-manno-octulosonate cytidylyltransferase, found in Polaromonas naphthalenivorans (strain CJ2).